A 431-amino-acid polypeptide reads, in one-letter code: Pyroglutamylated RF-amide peptide receptor (431 aa).

Over 1 to 46 (MQALNITPEQFSRLLRDHNLTREQFIALYRLRPLVYTPELPGRAKL) the chain is Extracellular. Asparagine 19 carries N-linked (GlcNAc...) asparagine glycosylation. The helical transmembrane segment at 47–67 (ALVLTGVLIFALALFGNALVF) threads the bilayer. Residues 68–81 (YVVTRSKAMRTVTN) lie on the Cytoplasmic side of the membrane. The chain crosses the membrane as a helical span at residues 82-102 (IFICSLALSDLLITFFCIPVT). Residues 103-120 (MLQNISDNWLGGAFICKM) are Extracellular-facing. The helical transmembrane segment at 121-141 (VPFVQSTAVVTEILTMTCIAV) threads the bilayer. Residues 142 to 162 (ERHQGLVHPFKMKWQYTNRRA) are Cytoplasmic-facing. Residues 163–183 (FTMLGVVWLVAVIVGSPMWHV) traverse the membrane as a helical segment. Topologically, residues 184–212 (QQLEIKYDFLYEKEHICCLEEWTSPVHQK) are extracellular. Residues 213–233 (IYTTFILVILFLLPLMVMLIL) traverse the membrane as a helical segment. At 234 to 271 (YSKIGYELWIKKRVGDGSVLRTIHGKEMSKIARKKKRA) the chain is on the cytoplasmic side. A helical transmembrane segment spans residues 272 to 292 (VIMMVTVVALFAVCWAPFHVV). Residues 293 to 311 (HMMIEYSNFEKEYDDVTIK) lie on the Extracellular side of the membrane. The chain crosses the membrane as a helical span at residues 312–332 (MIFAIVQIIGFSNSICNPIVY). At 333–431 (AFMNENFKKN…AENSPLDSGH (99 aa)) the chain is on the cytoplasmic side.

The protein belongs to the G-protein coupled receptor 1 family. As to expression, expressed widely in the brain with high levels in the hypothalamus, trigeminal ganglia and vestibular neurons, and moderate levels in the amygdala, cortex, pituitary, hippocampus, thalamus, caudate nucleus and medulla oblongata. In peripheral tissues, expressed at high levels in the retina and at moderate levels in the heart, kidney, testis and thyroid.

The protein localises to the cell membrane. Its function is as follows. Receptor for the orexigenic neuropeptide QRFP. The activity of this receptor is mediated by G proteins that modulate adenylate cyclase activity and intracellular calcium levels. In Homo sapiens (Human), this protein is Pyroglutamylated RF-amide peptide receptor (QRFPR).